The chain runs to 336 residues: MSKINLLLLCGGGSAEHDISLLSANYFETSLAKSEQFNVLRVVLDKFGQYQTAAGDDCELTNNREIRFRDETKAPWPVDYVIPCIHGYPGETGDIQSYFNLIQLPYFGCESEASSNCFNKITAKMWFSALGIPNTPYIFLNQYDDEAIAQTQAALENWGSIFVKAASQGSSVGCYKVDDSSKVAGVLKDAFGYAPYVIVEKTIKARELEVAVYEYQGEVVATLPGEIICDSNTFYTFDEKYAKSSKARTDVVAQNVPTDISEQIRAYAIKAFKGMKLRHLSRIDFFLTQDNEILLNEINTFPGSTPISMFPKMLQNHGHDFTEYLSLVINGQLAAK.

In terms of domain architecture, ATP-grasp spans 124 to 330 (KMWFSALGIP…FTEYLSLVIN (207 aa)). An ATP-binding site is contributed by 154-209 (ALENWGSIFVKAASQGSSVGCYKVDDSSKVAGVLKDAFGYAPYVIVEKTIKARELE). 3 residues coordinate Mg(2+): aspartate 284, glutamate 297, and asparagine 299.

This sequence belongs to the D-alanine--D-alanine ligase family. It depends on Mg(2+) as a cofactor. Mn(2+) is required as a cofactor.

It localises to the cytoplasm. It catalyses the reaction 2 D-alanine + ATP = D-alanyl-D-alanine + ADP + phosphate + H(+). It functions in the pathway cell wall biogenesis; peptidoglycan biosynthesis. Its function is as follows. Cell wall formation. This Shewanella sp. (strain MR-4) protein is D-alanine--D-alanine ligase.